We begin with the raw amino-acid sequence, 247 residues long: Caffeoyl-CoA O-methyltransferase 1 (247 aa).

Substrate is bound at residue lysine 21. Residues threonine 63, glutamate 85, 87-88 (GV), serine 93, aspartate 111, and alanine 140 each bind S-adenosyl-L-methionine. Aspartate 163 is a binding site for substrate. Aspartate 163 serves as a coordination point for a divalent metal cation. Aspartate 165 is an S-adenosyl-L-methionine binding site. A divalent metal cation-binding residues include aspartate 189 and asparagine 190. Position 194 (asparagine 194) interacts with substrate.

It belongs to the class I-like SAM-binding methyltransferase superfamily. Cation-dependent O-methyltransferase family. CCoAMT subfamily. It depends on a divalent metal cation as a cofactor.

The catalysed reaction is (E)-caffeoyl-CoA + S-adenosyl-L-methionine = (E)-feruloyl-CoA + S-adenosyl-L-homocysteine + H(+). It participates in aromatic compound metabolism; phenylpropanoid biosynthesis. In terms of biological role, methylates caffeoyl-CoA to feruloyl-CoA and 5-hydroxyferuloyl-CoA to sinapoyl-CoA. Plays a role in the synthesis of feruloylated polysaccharides. Involved in the reinforcement of the plant cell wall. Also involved in the responding to wounding or pathogen challenge by the increased formation of cell wall-bound ferulic acid polymers. This chain is Caffeoyl-CoA O-methyltransferase 1 (CCOAOMT1), found in Populus trichocarpa (Western balsam poplar).